Here is a 64-residue protein sequence, read N- to C-terminus: UPF0434 protein Oant_3286 (64 aa).

Belongs to the UPF0434 family.

The sequence is that of UPF0434 protein Oant_3286 from Brucella anthropi (strain ATCC 49188 / DSM 6882 / CCUG 24695 / JCM 21032 / LMG 3331 / NBRC 15819 / NCTC 12168 / Alc 37) (Ochrobactrum anthropi).